Consider the following 100-residue polypeptide: Urease subunit gamma (100 aa).

The protein belongs to the urease gamma subunit family. Heterotrimer of UreA (gamma), UreB (beta) and UreC (alpha) subunits. Three heterotrimers associate to form the active enzyme.

It is found in the cytoplasm. The enzyme catalyses urea + 2 H2O + H(+) = hydrogencarbonate + 2 NH4(+). Its pathway is nitrogen metabolism; urea degradation; CO(2) and NH(3) from urea (urease route): step 1/1. In Prochlorococcus marinus (strain MIT 9215), this protein is Urease subunit gamma.